We begin with the raw amino-acid sequence, 396 residues long: Elongation factor Tu (396 aa).

The tr-type G domain maps to 10–205 (KPHVNIGTIG…ACDESIPDPV (196 aa)). The interval 19–26 (GHVDHGKT) is G1. 19 to 26 (GHVDHGKT) serves as a coordination point for GTP. Mg(2+) is bound at residue Thr-26. Positions 62 to 66 (GITIN) are G2. The G3 stretch occupies residues 83 to 86 (DAPG). Residues 83–87 (DAPGH) and 138–141 (NKCD) contribute to the GTP site. The segment at 138–141 (NKCD) is G4. The G5 stretch occupies residues 175–177 (SAL).

Belongs to the TRAFAC class translation factor GTPase superfamily. Classic translation factor GTPase family. EF-Tu/EF-1A subfamily. Monomer.

Its subcellular location is the cytoplasm. The enzyme catalyses GTP + H2O = GDP + phosphate + H(+). Functionally, GTP hydrolase that promotes the GTP-dependent binding of aminoacyl-tRNA to the A-site of ribosomes during protein biosynthesis. The polypeptide is Elongation factor Tu (Corynebacterium kroppenstedtii (strain DSM 44385 / JCM 11950 / CIP 105744 / CCUG 35717)).